We begin with the raw amino-acid sequence, 405 residues long: Acetylornithine aminotransferase 2 (405 aa).

Pyridoxal 5'-phosphate contacts are provided by residues 105-106 (GT) and F138. N(2)-acetyl-L-ornithine is bound at residue R141. Residue 224–227 (DEVQ) participates in pyridoxal 5'-phosphate binding. K254 is subject to N6-(pyridoxal phosphate)lysine. S282 serves as a coordination point for N(2)-acetyl-L-ornithine. Position 283 (T283) interacts with pyridoxal 5'-phosphate.

Belongs to the class-III pyridoxal-phosphate-dependent aminotransferase family. ArgD subfamily. As to quaternary structure, homodimer. Pyridoxal 5'-phosphate is required as a cofactor.

It is found in the cytoplasm. The catalysed reaction is N(2)-acetyl-L-ornithine + 2-oxoglutarate = N-acetyl-L-glutamate 5-semialdehyde + L-glutamate. The protein operates within amino-acid biosynthesis; L-arginine biosynthesis; N(2)-acetyl-L-ornithine from L-glutamate: step 4/4. The chain is Acetylornithine aminotransferase 2 from Caulobacter vibrioides (strain ATCC 19089 / CIP 103742 / CB 15) (Caulobacter crescentus).